We begin with the raw amino-acid sequence, 353 residues long: Peroxidase C1A (353 aa).

The signal sequence occupies residues 1-30; it reads MHFSSSSTLFTCITLIPLVCLILHASLSDA. The residue at position 31 (Q31) is a Pyrrolidone carboxylic acid. 4 disulfide bridges follow: C41–C121, C74–C79, C127–C331, and C207–C239. N43 carries N-linked (GlcNAc...) asparagine glycosylation. H72 acts as the Proton acceptor in catalysis. Ca(2+)-binding residues include D73, V76, G78, D80, and S82. N-linked (GlcNAc...) asparagine glycosylation occurs at N87. E94 is a Ca(2+) binding site. Position 169 (P169) interacts with substrate. Residue N188 is glycosylated (N-linked (GlcNAc...) asparagine). H200 contributes to the heme b binding site. T201 contacts Ca(2+). 3 N-linked (GlcNAc...) asparagine glycosylation sites follow: N216, N228, and N244. 3 residues coordinate Ca(2+): D252, T255, and D260. N-linked (GlcNAc...) asparagine glycans are attached at residues N285 and N298. Residues 339–353 constitute a propeptide that is removed on maturation; sequence LLHDMVEVVDFVSSM.

The protein belongs to the peroxidase family. Classical plant (class III) peroxidase subfamily. Monomer. It depends on Ca(2+) as a cofactor. Heme b is required as a cofactor.

The protein localises to the secreted. It localises to the vacuole. The enzyme catalyses 2 a phenolic donor + H2O2 = 2 a phenolic radical donor + 2 H2O. Removal of H(2)O(2), oxidation of toxic reductants, biosynthesis and degradation of lignin, suberization, auxin catabolism, response to environmental stresses such as wounding, pathogen attack and oxidative stress. These functions might be dependent on each isozyme/isoform in each plant tissue. This is Peroxidase C1A (PRXC1A) from Armoracia rusticana (Horseradish).